A 329-amino-acid polypeptide reads, in one-letter code: Ribosomal protein L11 methyltransferase (329 aa).

Positions 177, 198, 220, and 264 each coordinate S-adenosyl-L-methionine.

It belongs to the methyltransferase superfamily. PrmA family.

It is found in the cytoplasm. It catalyses the reaction L-lysyl-[protein] + 3 S-adenosyl-L-methionine = N(6),N(6),N(6)-trimethyl-L-lysyl-[protein] + 3 S-adenosyl-L-homocysteine + 3 H(+). In terms of biological role, methylates ribosomal protein L11. The protein is Ribosomal protein L11 methyltransferase of Helicobacter pylori (strain J99 / ATCC 700824) (Campylobacter pylori J99).